The following is a 200-amino-acid chain: Large ribosomal subunit protein uL4 (200 aa).

The tract at residues Gly-38–Gly-65 is disordered.

Belongs to the universal ribosomal protein uL4 family. As to quaternary structure, part of the 50S ribosomal subunit.

One of the primary rRNA binding proteins, this protein initially binds near the 5'-end of the 23S rRNA. It is important during the early stages of 50S assembly. It makes multiple contacts with different domains of the 23S rRNA in the assembled 50S subunit and ribosome. In terms of biological role, forms part of the polypeptide exit tunnel. This chain is Large ribosomal subunit protein uL4, found in Pseudomonas aeruginosa (strain LESB58).